A 199-amino-acid polypeptide reads, in one-letter code: Cytochrome b (199 aa).

A run of 4 helical transmembrane segments spans residues 1–8 (LTGLFLAM), 32–53 (WLIRNLHANGASFFFICIYFHI), 68–88 (WNIGVVLLLLVMMTAFVGYVL), and 133–153 (FFAFHFLFPFVILAMTILHLL). Heme b contacts are provided by histidine 38 and histidine 52. 2 residues coordinate heme b: histidine 137 and histidine 151. Position 156 (histidine 156) interacts with a ubiquinone. A helical transmembrane segment spans residues 181 to 199 (YKDLLGFAILLVALASLAH).

Belongs to the cytochrome b family. In terms of assembly, the cytochrome bc1 complex contains 3 respiratory subunits (MT-CYB, CYC1 and UQCRFS1), 2 core proteins (UQCRC1 and UQCRC2) and probably 6 low-molecular weight proteins. Requires heme b as cofactor.

The protein resides in the mitochondrion inner membrane. Its function is as follows. Component of the ubiquinol-cytochrome c reductase complex (complex III or cytochrome b-c1 complex) that is part of the mitochondrial respiratory chain. The b-c1 complex mediates electron transfer from ubiquinol to cytochrome c. Contributes to the generation of a proton gradient across the mitochondrial membrane that is then used for ATP synthesis. The protein is Cytochrome b (mt-cyb) of Sarda chiliensis (Pacific bonito).